Here is a 374-residue protein sequence, read N- to C-terminus: Diels-Alderase fsa2 (374 aa).

The segment at 1-216 is beta-sandwich motif; it reads MSNVTVSAFT…MDRVWSPLSW (216 aa). Residues 216 to 374 form a beta-barrel motif region; sequence WPQVMTESYY…VGTGGQCELS (159 aa).

This sequence belongs to the Diels-Alderase family.

It catalyses the reaction (5S)-3-[(2E,6R,8E,10E,12E)-2,6-dimethyltetradeca-2,8,10,12-tetraenoyl]-5-(hydroxymethyl)pyrrolidine-2,4-dione = trichosetin. It functions in the pathway mycotoxin biosynthesis. In terms of biological role, diels-Alderase; part of the gene cluster that mediates the biosynthesis of the HIV-1 integrase inhibitor equisetin and of fusarisetin A, both trans-fused decalin-containing tetramic acids showing also antimicrobial activity. The PKS module of fsa1 together with the enoylreductase fsa3 catalyze the formation of the polyketide unit which is then conjugated to L-serine by the condensation domain of the fsa1 NRPS module. Activity of the Dieckmann cyclase domain (RED) results in release of the Dieckmann product intermediate. Diels-Alderase fsa2 is involved in endo-selective Diels-Alder cycloaddition to form the decalin ring, leading to the production of N-desmethylequisetin also called trichosetin. Subsequent N-methylation is carried out by fsa4 to give equisetin. The enzymatic gene responsible for the conversion of equisetin to fusarisetin A has not been identified yet and is probably located outside of the fsa cluster. This chain is Diels-Alderase fsa2, found in Fusarium sp. (strain FN080326).